Reading from the N-terminus, the 127-residue chain is Putative B3 domain-containing protein At4g12617 (127 aa).

Positions 35–127 (IMMPKTLLEA…HTRLNFKHVA (93 aa)) form a DNA-binding region, TF-B3.

It is found in the nucleus. The chain is Putative B3 domain-containing protein At4g12617 from Arabidopsis thaliana (Mouse-ear cress).